A 1133-amino-acid polypeptide reads, in one-letter code: Nuclear pore complex-interacting protein family member B5 (1133 aa).

A helical membrane pass occupies residues 60–84 (WLHVIIAFPTSYKVVITLWIVYLWV). Disordered stretches follow at residues 241–262 (NRMG…NSLS), 290–575 (LTPL…IKTP), and 868–1133 (ERLR…RRLS). The span at 252-262 (QQHSITDNSLS) shows a compositional bias: polar residues. Residues 349-359 (PLPPSALPSAP) show a composition bias toward pro residues. Basic and acidic residues-rich tracts occupy residues 406-416 (DNIKTPAERLR), 448-458 (DNIKTPAERLR), 490-500 (DNIKTPAERLR), 528-538 (DNIKTPAERLR), 903-913 (DNIKTPAERLR), 945-955 (DNIKTPAERLR), and 987-997 (DNIKTPAERLR).

This sequence belongs to the NPIP family.

The protein resides in the membrane. This chain is Nuclear pore complex-interacting protein family member B5 (NPIPB5), found in Homo sapiens (Human).